The sequence spans 728 residues: 1,4-alpha-glucan branching enzyme GlgB (728 aa).

Asp405 (nucleophile) is an active-site residue. Glu458 acts as the Proton donor in catalysis.

Belongs to the glycosyl hydrolase 13 family. GlgB subfamily. In terms of assembly, monomer.

The enzyme catalyses Transfers a segment of a (1-&gt;4)-alpha-D-glucan chain to a primary hydroxy group in a similar glucan chain.. The protein operates within glycan biosynthesis; glycogen biosynthesis. In terms of biological role, catalyzes the formation of the alpha-1,6-glucosidic linkages in glycogen by scission of a 1,4-alpha-linked oligosaccharide from growing alpha-1,4-glucan chains and the subsequent attachment of the oligosaccharide to the alpha-1,6 position. The polypeptide is 1,4-alpha-glucan branching enzyme GlgB (Salmonella paratyphi B (strain ATCC BAA-1250 / SPB7)).